Consider the following 253-residue polypeptide: N-acetylmuramoyl-L-alanine amidase CwlM (253 aa).

The MurNAc-LAA domain maps to 4–172 (IFIDPGHGGS…IARGHANGLA (169 aa)). Positions 179 to 253 (KNAAALYKVQ…AEFDTFIYQE (75 aa)) constitute an SPOR domain. 2 repeat units span residues 184–219 (LYKV…YRDS) and 220–253 (LYKV…IYQE). The tract at residues 184-253 (LYKVQIAAFR…AEFDTFIYQE (70 aa)) is 2 X 35 AA approximate tandem repeats.

The protein belongs to the N-acetylmuramoyl-L-alanine amidase 3 family.

The protein resides in the secreted. The enzyme catalyses Hydrolyzes the link between N-acetylmuramoyl residues and L-amino acid residues in certain cell-wall glycopeptides.. In terms of biological role, hydrolyzes the cell wall of M.luteus more efficiently than that of B.licheniformis and B.subtilis. The C-terminal region, including the repeats, determines substrate specificity. The chain is N-acetylmuramoyl-L-alanine amidase CwlM (cwlM) from Bacillus licheniformis.